The chain runs to 425 residues: Histidine--tRNA ligase (425 aa).

The protein belongs to the class-II aminoacyl-tRNA synthetase family. Homodimer.

The protein resides in the cytoplasm. It catalyses the reaction tRNA(His) + L-histidine + ATP = L-histidyl-tRNA(His) + AMP + diphosphate + H(+). This chain is Histidine--tRNA ligase, found in Shewanella sp. (strain MR-7).